The chain runs to 240 residues: Pyridoxine 5'-phosphate synthase (240 aa).

3-amino-2-oxopropyl phosphate is bound at residue asparagine 6. 8–9 is a 1-deoxy-D-xylulose 5-phosphate binding site; sequence DH. A 3-amino-2-oxopropyl phosphate-binding site is contributed by arginine 17. Histidine 42 functions as the Proton acceptor in the catalytic mechanism. Positions 44 and 49 each coordinate 1-deoxy-D-xylulose 5-phosphate. Residue glutamate 69 is the Proton acceptor of the active site. Threonine 99 is a 1-deoxy-D-xylulose 5-phosphate binding site. Histidine 190 serves as the catalytic Proton donor. Residues glycine 191 and 212–213 contribute to the 3-amino-2-oxopropyl phosphate site; that span reads GH.

Belongs to the PNP synthase family. In terms of assembly, homooctamer; tetramer of dimers.

It localises to the cytoplasm. The enzyme catalyses 3-amino-2-oxopropyl phosphate + 1-deoxy-D-xylulose 5-phosphate = pyridoxine 5'-phosphate + phosphate + 2 H2O + H(+). It functions in the pathway cofactor biosynthesis; pyridoxine 5'-phosphate biosynthesis; pyridoxine 5'-phosphate from D-erythrose 4-phosphate: step 5/5. Its function is as follows. Catalyzes the complicated ring closure reaction between the two acyclic compounds 1-deoxy-D-xylulose-5-phosphate (DXP) and 3-amino-2-oxopropyl phosphate (1-amino-acetone-3-phosphate or AAP) to form pyridoxine 5'-phosphate (PNP) and inorganic phosphate. This is Pyridoxine 5'-phosphate synthase from Pseudomonas entomophila (strain L48).